The following is a 378-amino-acid chain: Wnt inhibitory factor 1 (378 aa).

The first 28 residues, Met1–Tyr28, serve as a signal peptide directing secretion. One can recognise a WIF domain in the interval Met36 to Cys175. N-linked (GlcNAc...) asparagine glycosylation is present at Asn86. 6 cysteine pairs are disulfide-bonded: Cys138–Cys175, Cys180–Cys190, Cys184–Cys196, Cys212–Cys222, Cys216–Cys228, and Cys230–Cys239. 5 consecutive EGF-like domains span residues Gln176–Val205, Glu208–Glu240, Asn243–Glu272, Glu272–Ser304, and Lys305–Asn336. An N-linked (GlcNAc...) asparagine glycan is attached at Asn243. Intrachain disulfides connect Cys244-Cys254, Cys248-Cys260, Cys262-Cys271, Cys276-Cys286, Cys280-Cys292, Cys294-Cys303, Cys308-Cys318, Cys312-Cys324, and Cys326-Cys335. The tract at residues Val343–Val378 is disordered. The segment covering Glu367–Val378 has biased composition (polar residues).

As to expression, highly expressed in unsegmented paraxial mesoderm.

It localises to the secreted. Its function is as follows. Binds to WNT proteins and inhibits their activities. May be involved in mesoderm segmentation. The sequence is that of Wnt inhibitory factor 1 (wif1) from Danio rerio (Zebrafish).